The following is a 98-amino-acid chain: Small ribosomal subunit protein bS20 (98 aa).

This sequence belongs to the bacterial ribosomal protein bS20 family.

Functionally, binds directly to 16S ribosomal RNA. The sequence is that of Small ribosomal subunit protein bS20 from Synechococcus elongatus (strain ATCC 33912 / PCC 7942 / FACHB-805) (Anacystis nidulans R2).